Here is a 469-residue protein sequence, read N- to C-terminus: Phosphatidylinositol 4-kinase type 2-beta (469 aa).

The disordered stretch occupies residues 1–84 (MAEACEPTRP…LDRTRTTSSE (84 aa)). The residue at position 37 (serine 37) is a Phosphoserine. Residues 108–439 (GVFPERISQG…AQMPCVIVEC (332 aa)) enclose the PI3K/PI4K catalytic domain. Positions 114–120 (ISQGSSG) are G-loop. Residues serine 121 and lysine 136 each coordinate ATP. Residues 141-143 (EPY) are important for substrate binding. The interval 149 to 162 (KWTKYVHKVCCPCC) is important for interaction with membranes. ATP is bound by residues 245 to 248 (QLFV) and 259 to 260 (RR). The tract at residues 252-260 (KEAEYWLRR) is important for interaction with membranes. Residues 289–297 (RNTDRGNDN) are catalytic loop. The interval 330–350 (AIDNGLAFPFKHPDEWRAYPF) is activation loop. Aspartate 332 serves as a coordination point for ATP. The segment at 345 to 354 (WRAYPFHWAW) is important for interaction with membranes.

This sequence belongs to the PI3/PI4-kinase family. Type II PI4K subfamily.

The protein localises to the cytoplasm. It is found in the cytosol. Its subcellular location is the golgi apparatus membrane. The protein resides in the endoplasmic reticulum membrane. It localises to the cell membrane. The protein localises to the early endosome membrane. It carries out the reaction a 1,2-diacyl-sn-glycero-3-phospho-(1D-myo-inositol) + ATP = a 1,2-diacyl-sn-glycero-3-phospho-(1D-myo-inositol 4-phosphate) + ADP + H(+). In terms of biological role, together with PI4K2A and the type III PI4Ks (PIK4CA and PIK4CB) it contributes to the overall PI4-kinase activity of the cell. This contribution may be especially significant in plasma membrane, endosomal and Golgi compartments. The phosphorylation of phosphatidylinositol (PI) to PI4P is the first committed step in the generation of phosphatidylinositol 4,5-bisphosphate (PIP2), a precursor of the second messenger inositol 1,4,5-trisphosphate (InsP3). Contributes to the production of InsP3 in stimulated cells and is likely to be involved in the regulation of vesicular trafficking. The protein is Phosphatidylinositol 4-kinase type 2-beta (Pi4k2b) of Mus musculus (Mouse).